The following is a 244-amino-acid chain: Ureidoacrylate amidohydrolase RutB (244 aa).

Residue Asp-38 is the Proton acceptor of the active site. Lys-147 is a catalytic residue. The Nucleophile role is filled by Cys-180.

This sequence belongs to the isochorismatase family. RutB subfamily.

The catalysed reaction is (Z)-3-ureidoacrylate + H2O + H(+) = (Z)-3-aminoacrylate + NH4(+) + CO2. It carries out the reaction (Z)-3-ureidoacrylate + H2O = (Z)-3-aminoacrylate + carbamate + H(+). It catalyses the reaction (Z)-2-methylureidoacrylate + H2O + H(+) = (Z)-2-methylaminoacrylate + NH4(+) + CO2. Functionally, hydrolyzes ureidoacrylate to form aminoacrylate and carbamate. The carbamate hydrolyzes spontaneously, thereby releasing one of the nitrogen atoms of the pyrimidine ring as ammonia and one of its carbon atoms as CO2. The protein is Ureidoacrylate amidohydrolase RutB of Shigella flexneri serotype X (strain 2002017).